The primary structure comprises 456 residues: Frizzled/smoothened-like sans CRD protein F (456 aa).

The signal sequence occupies residues 1 to 30; sequence MIFNNLKNQNKIINFLIIFYFLSFLKQIES. Over 31-92 the chain is Extracellular; it reads QSINITSSSS…PFFTINEWNK (62 aa). N-linked (GlcNAc...) asparagine glycosylation is found at N34, N52, and N70. Residues 93–113 traverse the membrane as a helical segment; it reads FLNMSLVMGTISFFSGLFLLV. At 114-127 the chain is on the cytoplasmic side; it reads TYSPIVNKTHNRHT. Residues 128 to 148 form a helical membrane-spanning segment; sequence IGVMCMSFGVCLAMCSDMWNF. Over 149 to 174 the chain is Extracellular; the sequence is GSNFTEKSICPSPGQYLSTSNARCLS. Residue N151 is glycosylated (N-linked (GlcNAc...) asparagine). A helical membrane pass occupies residues 175–195; that stretch reads SGIFLQFGGVFGFLNWTLLSF. Over 196 to 211 the chain is Cytoplasmic; it reads DLFMNIKGIITKNYDK. Residues 212-232 traverse the membrane as a helical segment; the sequence is YYVSGTFIIAIIFTFVPIVND. Topologically, residues 233 to 252 are extracellular; that stretch reads QYSMSYIGLGCWLGSAMYQL. Residues 253–273 traverse the membrane as a helical segment; it reads IFFWILLSICLIVSSVFIILI. Over 274–297 the chain is Cytoplasmic; sequence LKEVYIIIKLSKQKTSLKGNIRPL. The chain crosses the membrane as a helical span at residues 298-318; the sequence is ICISITGFAFFYMFFYYISIV. The Extracellular segment spans residues 319 to 354; the sequence is VEGDYYERVLNEYTDCLMDPTKDISECKSPRMSVAS. A helical membrane pass occupies residues 355-375; sequence EFVFLLCLRLLGIGAFIFYGI. Residues 376–456 lie on the Cytoplasmic side of the membrane; that stretch reads NNKVKKIWLN…ESSLNSVDEI (81 aa). A disordered region spans residues 403-422; that stretch reads ADNDKSNSNGSKVLYRTNNT.

It belongs to the G-protein coupled receptor Fz/Smo family.

It localises to the membrane. The sequence is that of Frizzled/smoothened-like sans CRD protein F (fscF) from Dictyostelium discoideum (Social amoeba).